The sequence spans 71 residues: Large ribosomal subunit protein bL31 (71 aa).

Zn(2+) is bound by residues Cys16, Cys18, Cys37, and Cys40.

This sequence belongs to the bacterial ribosomal protein bL31 family. Type A subfamily. Part of the 50S ribosomal subunit. It depends on Zn(2+) as a cofactor.

Functionally, binds the 23S rRNA. This chain is Large ribosomal subunit protein bL31, found in Pseudoalteromonas atlantica (strain T6c / ATCC BAA-1087).